The primary structure comprises 258 residues: MVFNSTQDRQAKIVELLRDEQFLAIGRLTEHFQISVATARRDLSELHEAGLLRRTHGGAVSVTQVTQDKPNAARAVWNRAEKAAIAGVVAGMIVEGDTVLLDAGTTALEVAKKLADRRNLTFISNGLDIVEELTRGEGKSIYSVGGEYTETNRSFRGPLAEQFIRQFNVDKLILNAASIDVDRGLICTSSPVNASVARAMIEVSSRVIVVADHSKFTKSSLSVTARIEDVGVIVTDSGTRTIIETIPEKLRKKFVVAN.

An HTH deoR-type domain is found at 6-61 (TQDRQAKIVELLRDEQFLAIGRLTEHFQISVATARRDLSELHEAGLLRRTHGGAVS). A DNA-binding region (H-T-H motif) is located at residues 23–42 (LAIGRLTEHFQISVATARRD).

Represses opine catabolism and conjugal transfer of the nopaline Ti plasmid pTiC58. In Agrobacterium fabrum (strain C58 / ATCC 33970) (Agrobacterium tumefaciens (strain C58)), this protein is Transcriptional repressor AccR (accR).